We begin with the raw amino-acid sequence, 76 residues long: Small proline-rich protein 2I (76 aa).

3 tandem repeats follow at residues 21-29, 30-38, and 39-47. The segment at 21-47 is 3 X 9 AA approximate tandem repeats; that stretch reads KKCPEPCPPPQCPEPCPPPKCPEPCPE. A compositionally biased stretch (pro residues) spans 40 to 53; sequence KCPEPCPESCPPPS. The segment at 40–76 is disordered; it reads KCPEPCPESCPPPSYQQKCPPVQPPPPCQQKCPPKSK.

The protein belongs to the cornifin (SPRR) family. Not expressed in uterus.

The protein resides in the cytoplasm. Its function is as follows. Cross-linked envelope protein of keratinocytes. It is a keratinocyte protein that first appears in the cell cytosol, but ultimately becomes cross-linked to membrane proteins by transglutaminase. All that results in the formation of an insoluble envelope beneath the plasma membrane. The sequence is that of Small proline-rich protein 2I (Sprr2i) from Mus musculus (Mouse).